Reading from the N-terminus, the 273-residue chain is UPF0173 metal-dependent hydrolase Bpro_4324 (273 aa).

Belongs to the UPF0173 family.

This Polaromonas sp. (strain JS666 / ATCC BAA-500) protein is UPF0173 metal-dependent hydrolase Bpro_4324.